The following is a 281-amino-acid chain: ATP phosphoribosyltransferase (281 aa).

The protein belongs to the ATP phosphoribosyltransferase family. Long subfamily. Requires Mg(2+) as cofactor.

The protein localises to the cytoplasm. The enzyme catalyses 1-(5-phospho-beta-D-ribosyl)-ATP + diphosphate = 5-phospho-alpha-D-ribose 1-diphosphate + ATP. It participates in amino-acid biosynthesis; L-histidine biosynthesis; L-histidine from 5-phospho-alpha-D-ribose 1-diphosphate: step 1/9. Its activity is regulated as follows. Feedback inhibited by histidine. Functionally, catalyzes the condensation of ATP and 5-phosphoribose 1-diphosphate to form N'-(5'-phosphoribosyl)-ATP (PR-ATP). Has a crucial role in the pathway because the rate of histidine biosynthesis seems to be controlled primarily by regulation of HisG enzymatic activity. The sequence is that of ATP phosphoribosyltransferase from Natronomonas pharaonis (strain ATCC 35678 / DSM 2160 / CIP 103997 / JCM 8858 / NBRC 14720 / NCIMB 2260 / Gabara) (Halobacterium pharaonis).